Here is a 1068-residue protein sequence, read N- to C-terminus: Protein AF-10 (1068 aa).

The segment at 22–74 (IGGCCVCSDERGWAENPLVYCDGHGCSVAVHQACYGIVQVPTGPWFCRKCESQ) adopts a PHD-type 1 zinc-finger fold. A C2HC pre-PHD-type zinc finger spans residues 79–112 (RVRCELCPHKDGALKRTDNGGWAHVVCALYIPEV). Residues 106–190 (ALYIPEVQFA…EGNGADNVQY (85 aa)) form a required for interaction with histone H3 region. The segment at 135–198 (KTCYICDEQG…QYCGYCKYHF (64 aa)) adopts a PHD-type 2 zinc-finger fold. The tract at residues 207–260 (GSNRSYEQSLSDSSSHSQDKHHEKEKKKYKEKDKHKQKHKKQPEPSPALVPSLT) is disordered. At Ser217 the chain carries Phosphoserine. The span at 223–240 (SQDKHHEKEKKKYKEKDK) shows a compositional bias: basic and acidic residues. Ser252 bears the Phosphoserine mark. Residue Lys280 forms a Glycyl lysine isopeptide (Lys-Gly) (interchain with G-Cter in SUMO2) linkage. Positions 296 to 305 (EVSAHTSSGK) are enriched in polar residues. Disordered regions lie at residues 296–416 (EVSA…SFSS) and 428–506 (SQPK…SVAS). Over residues 306-317 (DVSEARGSEGKG) the composition is skewed to basic and acidic residues. Residues 340-351 (TAVSASSPFPQG) show a composition bias toward polar residues. The span at 352–372 (SFSGTPGSVKSSSGSSVQSPQ) shows a compositional bias: low complexity. Polar residues-rich tracts occupy residues 387-396 (YTHTQQPSST), 404-416 (SGSQ…SFSS), and 428-446 (SQPK…SSLP). Ser436 carries the post-translational modification Phosphoserine. Residues 465–483 (EKKRKGNKQSKHGPGRPKG) show a composition bias toward basic residues. A compositionally biased stretch (low complexity) spans 490 to 506 (VSHLSVSSASPTSSVAS). Ser532 is subject to Phosphoserine. Over residues 583–594 (SGSGSSTPVSSS) the composition is skewed to low complexity. 2 disordered regions span residues 583 to 613 (SGSG…LSPS) and 660 to 698 (SESS…NLQL). Residues 595-604 (HIPQQSSGHL) show a composition bias toward polar residues. Over residues 681–692 (SSPRGSLSPRSP) the composition is skewed to low complexity. 3 positions are modified to phosphoserine: Ser686, Ser688, and Ser691. A leucine-zipper region spans residues 752–780 (LQVENRRLEEQIKNLTAKKERLQLLNAQL). Disordered regions lie at residues 786-869 (AITT…VSGV) and 1040-1068 (PFLT…QEKS). Polar residues predominate over residues 787–816 (ITTNPSPSHQMHTYTAQTAPPPDSLNSSKS). 2 stretches are compositionally biased toward low complexity: residues 836-850 (LTSS…SALS) and 857-869 (QSPA…VSGV). A compositionally biased stretch (polar residues) spans 1040-1054 (PFLTIHGDSTSQKVT).

In terms of assembly, self-associates. Interacts with FSTL3; the interaction enhances MLLT10 in vitro transcriptional activity and self-association. Interacts with YEATS4. Interacts with SS18. Interacts with DOT1L. Interacts with histone H3; interaction is necessary for MLLT10 binding to nucleosomes; interaction is inhibited by histone H3 'Lys-27' methylations (H3K27me1, H3K27me2 and H3K27me3) amd acetylation; interaction stabilizes association of MLLT10 at chromatin; interaction is essential for histone H3 'Lys-79' dimethylation (H3K79me2).

Its subcellular location is the nucleus. Functionally, probably involved in transcriptional regulation. Binds to cruciform DNA. In cells, binding to unmodified histone H3 regulates DOT1L functions including histone H3 'Lys-79' dimethylation (H3K79me2) and gene activation. This Mus musculus (Mouse) protein is Protein AF-10.